The following is a 338-amino-acid chain: D-erythrose-4-phosphate dehydrogenase (338 aa).

NAD(+) is bound at residue 12–13; sequence RI. Substrate is bound by residues 154–156, Arg200, 213–214, and Arg236; these read SCT and TK. Residue Cys155 is the Nucleophile of the active site. Asn318 provides a ligand contact to NAD(+).

The protein belongs to the glyceraldehyde-3-phosphate dehydrogenase family. Epd subfamily. As to quaternary structure, homotetramer.

It localises to the cytoplasm. The catalysed reaction is D-erythrose 4-phosphate + NAD(+) + H2O = 4-phospho-D-erythronate + NADH + 2 H(+). The protein operates within cofactor biosynthesis; pyridoxine 5'-phosphate biosynthesis; pyridoxine 5'-phosphate from D-erythrose 4-phosphate: step 1/5. Catalyzes the NAD-dependent conversion of D-erythrose 4-phosphate to 4-phosphoerythronate. In Yersinia pestis bv. Antiqua (strain Antiqua), this protein is D-erythrose-4-phosphate dehydrogenase.